The primary structure comprises 584 residues: Transcriptional regulator STP2 (584 aa).

2 stretches are compositionally biased toward polar residues: residues 1–11 and 180–202; these read MSVAITSNNNK and AESN…SISD. Disordered regions lie at residues 1–22 and 161–214; these read MSVA…PHLK and KMHP…STVS. The span at 203-214 shows a compositional bias: low complexity; it reads SPSHSETESTVS. A C2H2-type zinc finger spans residues 225-247; it reads FKCPSCDAEFRVRGYLTRHMKKH. Disordered stretches follow at residues 381-496 and 553-584; these read RQKK…PQQP and QYQP…SMYF. Residues 394 to 407 show a composition bias toward low complexity; it reads SESSIQSQESESSI. Residues 431–441 are compositionally biased toward basic residues; the sequence is QHQHQHHHHVQ. Positions 442–480 are enriched in low complexity; it reads NQHQQHVNQQQSIATPASIYSSSASSTSSYESTHSPYTP. The span at 481 to 496 shows a compositional bias: polar residues; that stretch reads QSSRSPLSHMYNPQQP.

Proteolytically cleaved: activated by the amino acid-induced proteolytic removal of an N-terminal inhibitory domain.

The protein localises to the cell membrane. It is found in the nucleus. Transcription factor involved in the regulation of gene expression in response to extracellular amino acid levels. Synthesized as latent cytoplasmic precursor, which, upon a signal initiated by the plasma membrane SPS amino acid sensor system (including CSY1 and CSH3), becomes proteolytically activated and relocates to the nucleus, where it induces the expression of SPS-sensor-regulated genes. Required for efficient alkalinization through the release of ammonia from the cells produced during the breakdown of amino acids, and subsequent switch to the hyphal form. This chain is Transcriptional regulator STP2 (STP2), found in Candida albicans (strain SC5314 / ATCC MYA-2876) (Yeast).